The chain runs to 160 residues: RNA pyrophosphohydrolase (160 aa).

The Nudix hydrolase domain occupies proline 10–aspartate 154. The Nudix box signature appears at glycine 44–glycine 65.

This sequence belongs to the Nudix hydrolase family. RppH subfamily. The cofactor is a divalent metal cation.

Accelerates the degradation of transcripts by removing pyrophosphate from the 5'-end of triphosphorylated RNA, leading to a more labile monophosphorylated state that can stimulate subsequent ribonuclease cleavage. This Roseobacter denitrificans (strain ATCC 33942 / OCh 114) (Erythrobacter sp. (strain OCh 114)) protein is RNA pyrophosphohydrolase.